The chain runs to 43 residues: Plasma membrane ATPase proteolipid 2 (43 aa).

Positions 1–5 (MLMST) are excised as a propeptide. Residues 9–29 (GVILVFILVGLACIAIISTII) traverse the membrane as a helical segment. The Cytoplasmic portion of the chain corresponds to 30–43 (YRKWQARQRGLQRF).

Monomer and homodimer. Associated with the 100 kDa subunit of the plasma membrane H(+)-ATPase.

Its subcellular location is the cell membrane. The polypeptide is Plasma membrane ATPase proteolipid 2 (PMP2) (Saccharomyces cerevisiae (strain ATCC 204508 / S288c) (Baker's yeast)).